Consider the following 839-residue polypeptide: MGPRATTICSLFFLLWVLAEPAENSDFYLPGDYLLGGLFSLHANMKGIVHLNFLQVPMCKEYEVKVIGYNLMQDMRFSVEEINNDSSLLPGVLLGYEMVDVCYVSNNVQPVLYFLAHEDNLLPIQEDYSDYVSRVVAVIGPDNSESVMTVANFLSLFLLPQITYSAISDELRDKVRFPALLRTTPSADHHIEAMVQLMLHFRWNWIIVLVSSDTYGRDNGQLLGERLARRDICIAFQETLPTLQPNQNMTSEERQRLVTIVDKLQQSTARVVVVFSPDLTLYDFFNEVLRQNFTGAVWIASESWAIDPVLHNLTELRHTGTFLGITIQSVPIPGFSEFRERDSQAGPPPLGKTSQRSTCNQECDNCLNATLSFNTILRLSGERVVYSVYSAVYAVAHALHSLLGCDHSTCTKRVVYPWQLLEEIWKVNFTLLDHQIFFDPQGDMALHLEIVQWQWDRSQNPFQSVASYHPLQRQLKNIQDISWHTINNTIPVSMCSKRCQSGQKKKPVGIHVCCFECIDCLPGTFLNHTEDEYECQACPSNEWSYQSETSCFKRQLAFLEWHEAPTIAVALLAALGFLSTLAILVIFWRHFQTPMVRSAGGPMCFLMLTLLLVAYMVVPVYVGPPKVSTCLCRQALFPLCFTICISCIAVRSFQIICAFKMASRFPRAYSYWVRYQGPYVSMAFITVLKMVIVVIGMLATGLNPTTRTDPDDPKIMIVSCNPNYRNSLLFNTSLDLLLSVVGFSFANMGKELPTNYNEAKFITLSMTFYFTSSISLCTFMSAYSGVLVTIVDLLVTVLNLLAISLGYFGPKCYMILFYPERNTPAYFNSVIQGYTMTRD.

The N-terminal stretch at 1–19 (MGPRATTICSLFFLLWVLA) is a signal peptide. The Extracellular segment spans residues 20 to 566 (EPAENSDFYL…AFLEWHEAPT (547 aa)). N-linked (GlcNAc...) asparagine glycans are attached at residues N84, N248, N292, N312, N368, N428, N487, and N527. A helical membrane pass occupies residues 567–587 (IAVALLAALGFLSTLAILVIF). The Cytoplasmic portion of the chain corresponds to 588–602 (WRHFQTPMVRSAGGP). Residues 603–623 (MCFLMLTLLLVAYMVVPVYVG) form a helical membrane-spanning segment. Topologically, residues 624–635 (PPKVSTCLCRQA) are extracellular. The chain crosses the membrane as a helical span at residues 636 to 656 (LFPLCFTICISCIAVRSFQII). Over 657–681 (CAFKMASRFPRAYSYWVRYQGPYVS) the chain is Cytoplasmic. The chain crosses the membrane as a helical span at residues 682–702 (MAFITVLKMVIVVIGMLATGL). At 703-727 (NPTTRTDPDDPKIMIVSCNPNYRNS) the chain is on the extracellular side. The chain crosses the membrane as a helical span at residues 728 to 748 (LLFNTSLDLLLSVVGFSFANM). Residues 749–760 (GKELPTNYNEAK) lie on the Cytoplasmic side of the membrane. Residues 761-781 (FITLSMTFYFTSSISLCTFMS) form a helical membrane-spanning segment. Topologically, residues 782–784 (AYS) are extracellular. Residues 785-805 (GVLVTIVDLLVTVLNLLAISL) form a helical membrane-spanning segment. The Cytoplasmic segment spans residues 806 to 839 (GYFGPKCYMILFYPERNTPAYFNSVIQGYTMTRD).

The protein belongs to the G-protein coupled receptor 3 family. TAS1R subfamily. Forms heterodimers with TAS1R3.

Its subcellular location is the cell membrane. Putative taste receptor. TAS1R2/TAS1R3 recognizes diverse natural and synthetic sweeteners. In Pongo pygmaeus (Bornean orangutan), this protein is Taste receptor type 1 member 2 (TAS1R2).